Consider the following 76-residue polypeptide: MAIGTPAHEFRELNEEELVTRLNEAKEELFNLRFQLATGQLTNNRRLRTVKRDIARIYTVIRERELGLSVVPGAEA.

The protein belongs to the universal ribosomal protein uL29 family.

The protein is Large ribosomal subunit protein uL29 of Corynebacterium glutamicum (strain R).